The chain runs to 443 residues: 3-phosphoshikimate 1-carboxyvinyltransferase (443 aa).

The disordered stretch occupies residues 1-25; the sequence is MSHSAEPLPMTARRSGPLTGEAQVP. Residues Lys28, Ser29, and Arg33 each contribute to the 3-phosphoshikimate site. Lys28 serves as a coordination point for phosphoenolpyruvate. Gly101 and Arg129 together coordinate phosphoenolpyruvate. Residues Ser174, Gln176, Asp326, and Lys353 each coordinate 3-phosphoshikimate. Gln176 provides a ligand contact to phosphoenolpyruvate. The Proton acceptor role is filled by Asp326. 2 residues coordinate phosphoenolpyruvate: Arg357 and Arg400.

Belongs to the EPSP synthase family. As to quaternary structure, monomer.

Its subcellular location is the cytoplasm. The enzyme catalyses 3-phosphoshikimate + phosphoenolpyruvate = 5-O-(1-carboxyvinyl)-3-phosphoshikimate + phosphate. It functions in the pathway metabolic intermediate biosynthesis; chorismate biosynthesis; chorismate from D-erythrose 4-phosphate and phosphoenolpyruvate: step 6/7. Functionally, catalyzes the transfer of the enolpyruvyl moiety of phosphoenolpyruvate (PEP) to the 5-hydroxyl of shikimate-3-phosphate (S3P) to produce enolpyruvyl shikimate-3-phosphate and inorganic phosphate. This is 3-phosphoshikimate 1-carboxyvinyltransferase from Paracoccus denitrificans (strain Pd 1222).